The sequence spans 129 residues: Arsenate-mycothiol transferase ArsC2 (129 aa).

This sequence belongs to the low molecular weight phosphotyrosine protein phosphatase family.

Its subcellular location is the cytoplasm. It catalyses the reaction mycothiol + arsenate = arseno-mycothiol + H2O. Its function is as follows. Involved in defense against toxic arsenate. Involved in the mycothiol/myoredoxin redox pathway which uses a mycothioltransferase mechanism; facilitates adduct formation between arsenate and mycothiol. In Corynebacterium glutamicum (strain ATCC 13032 / K051), this protein is Arsenate-mycothiol transferase ArsC2 (arsC2).